The following is a 167-amino-acid chain: NADH-quinone oxidoreductase subunit B 2 (167 aa).

[4Fe-4S] cluster contacts are provided by Cys38, Cys39, Cys103, and Cys132.

The protein belongs to the complex I 20 kDa subunit family. NDH-1 is composed of 14 different subunits. Subunits NuoB, C, D, E, F, and G constitute the peripheral sector of the complex. [4Fe-4S] cluster serves as cofactor.

It is found in the cell inner membrane. The catalysed reaction is a quinone + NADH + 5 H(+)(in) = a quinol + NAD(+) + 4 H(+)(out). In terms of biological role, NDH-1 shuttles electrons from NADH, via FMN and iron-sulfur (Fe-S) centers, to quinones in the respiratory chain. The immediate electron acceptor for the enzyme in this species is believed to be ubiquinone. Couples the redox reaction to proton translocation (for every two electrons transferred, four hydrogen ions are translocated across the cytoplasmic membrane), and thus conserves the redox energy in a proton gradient. The chain is NADH-quinone oxidoreductase subunit B 2 from Rhizobium etli (strain CIAT 652).